We begin with the raw amino-acid sequence, 567 residues long: Dihydrolipoyl dehydrogenase 2, chloroplastic (567 aa).

The N-terminal 67 residues, 1-67 (MQSVLSLSFS…HIQSRRIEVS (67 aa)), are a transit peptide targeting the chloroplast. FAD contacts are provided by residues 114–122 (EGDVVGGTC), Lys-131, Gly-197, and 221–223 (TGS). Cys-122 and Cys-127 are disulfide-bonded. Residues 258–265 (GSGYIGLE), Glu-281, and Gly-354 contribute to the NAD(+) site. FAD contacts are provided by residues Asp-400 and 406-409 (MLAH). His-536 functions as the Proton acceptor in the catalytic mechanism.

The protein belongs to the class-I pyridine nucleotide-disulfide oxidoreductase family. As to quaternary structure, homodimer. Part of the plastidial pyruvate dehydrogenase complex (PDC) containing multiple copies of three enzymatic components: pyruvate dehydrogenase (E1), dihydrolipoamide acetyltransferase (E2) and lipoamide dehydrogenase (E3). FAD serves as cofactor. In terms of tissue distribution, expressed mainly in flower buds and immature siliques, and to a lesser extent in flowers.

The protein resides in the plastid. It is found in the chloroplast stroma. It carries out the reaction N(6)-[(R)-dihydrolipoyl]-L-lysyl-[protein] + NAD(+) = N(6)-[(R)-lipoyl]-L-lysyl-[protein] + NADH + H(+). Its function is as follows. Lipoamide dehydrogenase is a component of the plastidial pyruvate dehydrogenase complex (PDC). The protein is Dihydrolipoyl dehydrogenase 2, chloroplastic (LPD2) of Arabidopsis thaliana (Mouse-ear cress).